Reading from the N-terminus, the 76-residue chain is Small ribosomal subunit protein bS18 (76 aa).

This sequence belongs to the bacterial ribosomal protein bS18 family. As to quaternary structure, part of the 30S ribosomal subunit. Forms a tight heterodimer with protein bS6.

In terms of biological role, binds as a heterodimer with protein bS6 to the central domain of the 16S rRNA, where it helps stabilize the platform of the 30S subunit. The protein is Small ribosomal subunit protein bS18 of Nitrosomonas europaea (strain ATCC 19718 / CIP 103999 / KCTC 2705 / NBRC 14298).